The primary structure comprises 462 residues: uncharacterized protein (462 aa).

In terms of domain architecture, HTH gntR-type spans 22 to 90 (KPIYKALAGQ…VGSGTFVSYD (69 aa)). A DNA-binding region (H-T-H motif) is located at residues 50–69 (QRELADYLDLNVSTISKAFK). Position 308 is an N6-(pyridoxal phosphate)lysine (Lys-308).

The protein in the C-terminal section; belongs to the class-I pyridoxal-phosphate-dependent aminotransferase family. It depends on pyridoxal 5'-phosphate as a cofactor.

This is an uncharacterized protein from Bacillus subtilis (strain 168).